We begin with the raw amino-acid sequence, 178 residues long: Endoribonuclease YbeY (178 aa).

Residues His-118, His-122, and His-128 each contribute to the Zn(2+) site.

The protein belongs to the endoribonuclease YbeY family. It depends on Zn(2+) as a cofactor.

It localises to the cytoplasm. Functionally, single strand-specific metallo-endoribonuclease involved in late-stage 70S ribosome quality control and in maturation of the 3' terminus of the 16S rRNA. The chain is Endoribonuclease YbeY from Mycolicibacterium gilvum (strain PYR-GCK) (Mycobacterium gilvum (strain PYR-GCK)).